A 333-amino-acid polypeptide reads, in one-letter code: MASTIKEVFAEIAAPVENSHGKVTVVGVGQVGMACAYSILQQNLANELCLVDVVADKLKGEMMDLQHGLAFTRHCTVKADTDYSITAGSKLCVVTAGARQREGETRLSLVQRNVEIFKGIIPQLVKYSPDTCILVVSNPVDVLTYVTWKLSGLPRERVFGSGTNLDSARFRFLLSEKLNIAPSSCHGWIIGEHGDSSVAVWSGVNVAGVTLHEIKPDIGEKTDNEHWEAEIHKKVVDSAYEIIKLKGYTSWAIGLSVAKIAQGIFSNSRNVFALSTNVKGFHGINDDVYLSLPVVLGSAGLTHVVKQQLTEAEVQKLHNSAKALLEVQNGIVM.

NAD(+) is bound by residues Gly-29 to Lys-57 and Arg-99. Residues Arg-106, Asn-138, and Arg-169 each coordinate substrate. Asn-138 serves as a coordination point for NAD(+). His-193 serves as the catalytic Proton acceptor. Thr-249 is a binding site for substrate.

The protein belongs to the LDH/MDH superfamily. LDH family. As to quaternary structure, homotetramer.

It is found in the cytoplasm. The catalysed reaction is (S)-lactate + NAD(+) = pyruvate + NADH + H(+). It participates in fermentation; pyruvate fermentation to lactate; (S)-lactate from pyruvate: step 1/1. The protein is L-lactate dehydrogenase (ldh-1) of Caenorhabditis elegans.